The sequence spans 548 residues: Ran-binding protein 9 (548 aa).

Residues 1–14 (MSSPPLHGLSSGGH) are compositionally biased toward low complexity. The segment at 1–26 (MSSPPLHGLSSGGHLSRDPPPRSWSP) is disordered. The 188-residue stretch at 2-189 (SSPPLHGLSS…VDANFGQSPF (188 aa)) folds into the B30.2/SPRY domain. A compositionally biased stretch (basic and acidic residues) spans 15–26 (LSRDPPPRSWSP). The 33-residue stretch at 217 to 249 (WQSMIQRMVSSYLVHHGYCSTAEAFAKSTDQTV) folds into the LisH domain. The CTLH domain occupies 255-312 (SIKNRQRIQKLVLSGRMGEAIETTQQLYPSLLERNPNLLFTLKVRQFIEMVNGTDSEV).

Belongs to the RANBP9/10 family. Identified in the CTLH complex that contains at least MAEA, RMND5A (or alternatively its paralog RMND5B), GID8, WDR26, and RANBP9 and/or RANBP10.

The protein localises to the cytoplasm. It localises to the cell membrane. It is found in the nucleus. May act as scaffolding protein, and as adapter protein to couple membrane receptors to intracellular signaling pathways. Acts as a mediator of cell spreading and actin cytoskeleton rearrangement. Core component of the CTLH E3 ubiquitin-protein ligase complex that mediates ubiquitination and subsequent proteasomal degradation of target proteins. The sequence is that of Ran-binding protein 9 (ranbp9) from Xenopus tropicalis (Western clawed frog).